A 523-amino-acid chain; its full sequence is UDP-glucuronosyltransferase 3A2 (523 aa).

Positions 1 to 22 are cleaved as a signal peptide; it reads MAAHRRWLLMSFLFLEVILLEA. The Extracellular portion of the chain corresponds to 23-487; the sequence is AKILTISTLS…QPWHEQYMLD (465 aa). A glycan (N-linked (GlcNAc...) asparagine) is linked at asparagine 52. The chain crosses the membrane as a helical span at residues 488-508; it reads VFLFLLGLMLGTLWLSVKVLV. Residues 509 to 523 lie on the Cytoplasmic side of the membrane; it reads AVTRYLSIATKVKEA.

This sequence belongs to the UDP-glycosyltransferase family. As to expression, highly expressed in kidney, while it is expressed at low levels in liver. Not detected in other tissues examined.

The protein resides in the membrane. It carries out the reaction glucuronate acceptor + UDP-alpha-D-glucuronate = acceptor beta-D-glucuronoside + UDP + H(+). UDP-glucuronosyltransferases catalyze phase II biotransformation reactions in which lipophilic substrates are conjugated with glucuronic acid to increase water solubility and enhance excretion. They are of major importance in the conjugation and subsequent elimination of potentially toxic xenobiotics and endogenous compounds. The polypeptide is UDP-glucuronosyltransferase 3A2 (Ugt3a2) (Mus musculus (Mouse)).